We begin with the raw amino-acid sequence, 264 residues long: Phosphoribosylaminoimidazole-succinocarboxamide synthase 1 (264 aa).

Belongs to the SAICAR synthetase family.

The catalysed reaction is 5-amino-1-(5-phospho-D-ribosyl)imidazole-4-carboxylate + L-aspartate + ATP = (2S)-2-[5-amino-1-(5-phospho-beta-D-ribosyl)imidazole-4-carboxamido]succinate + ADP + phosphate + 2 H(+). The protein operates within purine metabolism; IMP biosynthesis via de novo pathway; 5-amino-1-(5-phospho-D-ribosyl)imidazole-4-carboxamide from 5-amino-1-(5-phospho-D-ribosyl)imidazole-4-carboxylate: step 1/2. The polypeptide is Phosphoribosylaminoimidazole-succinocarboxamide synthase 1 (purC1) (Mesorhizobium japonicum (strain LMG 29417 / CECT 9101 / MAFF 303099) (Mesorhizobium loti (strain MAFF 303099))).